The primary structure comprises 728 residues: Lanosterol synthase (728 aa).

The PFTB 1 repeat unit spans residues R117 to G159. Catalysis depends on D450, which acts as the Proton donor. PFTB repeat units lie at residues I561–G602 and V611–G657.

This sequence belongs to the terpene cyclase/mutase family.

Its subcellular location is the lipid droplet. The protein resides in the endoplasmic reticulum membrane. It carries out the reaction (S)-2,3-epoxysqualene = lanosterol. Its pathway is terpene metabolism; lanosterol biosynthesis; lanosterol from farnesyl diphosphate: step 3/3. Functionally, lanosterol synthase; part of the third module of ergosterol biosynthesis pathway that includes the late steps of the pathway. ERG7 catalyzes the cyclization of (S)-2,3 oxidosqualene to lanosterol, a reaction that forms the sterol core. The third module or late pathway involves the ergosterol synthesis itself through consecutive reactions that mainly occur in the endoplasmic reticulum (ER) membrane. Firstly, the squalene synthase ERG9 catalyzes the condensation of 2 farnesyl pyrophosphate moieties to form squalene, which is the precursor of all steroids. Squalene synthase is crucial for balancing the incorporation of farnesyl diphosphate (FPP) into sterol and nonsterol isoprene synthesis. Secondly, the squalene epoxidase ERG1 catalyzes the stereospecific oxidation of squalene to (S)-2,3-epoxysqualene, which is considered to be a rate-limiting enzyme in steroid biosynthesis. Then, the lanosterol synthase ERG7 catalyzes the cyclization of (S)-2,3 oxidosqualene to lanosterol, a reaction that forms the sterol core. In the next steps, lanosterol is transformed to zymosterol through a complex process involving various demethylation, reduction and desaturation reactions. The lanosterol 14-alpha-demethylase ERG11 (also known as CYP51) catalyzes C14-demethylation of lanosterol to produce 4,4'-dimethyl cholesta-8,14,24-triene-3-beta-ol, which is critical for ergosterol biosynthesis. The C-14 reductase ERG24 reduces the C14=C15 double bond of 4,4-dimethyl-cholesta-8,14,24-trienol to produce 4,4-dimethyl-cholesta-8,24-dienol. 4,4-dimethyl-cholesta-8,24-dienol is substrate of the C-4 demethylation complex ERG25-ERG26-ERG27 in which ERG25 catalyzes the three-step monooxygenation required for the demethylation of 4,4-dimethyl and 4alpha-methylsterols, ERG26 catalyzes the oxidative decarboxylation that results in a reduction of the 3-beta-hydroxy group at the C-3 carbon to an oxo group, and ERG27 is responsible for the reduction of the keto group on the C-3. ERG28 has a role as a scaffold to help anchor ERG25, ERG26 and ERG27 to the endoplasmic reticulum and ERG29 regulates the activity of the iron-containing C4-methylsterol oxidase ERG25. Then, the sterol 24-C-methyltransferase ERG6 catalyzes the methyl transfer from S-adenosyl-methionine to the C-24 of zymosterol to form fecosterol. The C-8 sterol isomerase ERG2 catalyzes the reaction which results in unsaturation at C-7 in the B ring of sterols and thus converts fecosterol to episterol. The sterol-C5-desaturase ERG3 then catalyzes the introduction of a C-5 double bond in the B ring to produce 5-dehydroepisterol. The C-22 sterol desaturase ERG5 further converts 5-dehydroepisterol into ergosta-5,7,22,24(28)-tetraen-3beta-ol by forming the C-22(23) double bond in the sterol side chain. Finally, ergosta-5,7,22,24(28)-tetraen-3beta-ol is substrate of the C-24(28) sterol reductase ERG4 to produce ergosterol. In Candida albicans (strain SC5314 / ATCC MYA-2876) (Yeast), this protein is Lanosterol synthase.